A 211-amino-acid polypeptide reads, in one-letter code: 2,3-bisphosphoglycerate-dependent phosphoglycerate mutase (211 aa).

Residues 9–16 (RHGQSDWN), 22–23 (TG), Arg-61, 88–91 (ERDY), Lys-99, 115–116 (RR), and 159–160 (GN) contribute to the substrate site. His-10 acts as the Tele-phosphohistidine intermediate in catalysis. Glu-88 (proton donor/acceptor) is an active-site residue.

The protein belongs to the phosphoglycerate mutase family. BPG-dependent PGAM subfamily. As to quaternary structure, homodimer.

The enzyme catalyses (2R)-2-phosphoglycerate = (2R)-3-phosphoglycerate. The protein operates within carbohydrate degradation; glycolysis; pyruvate from D-glyceraldehyde 3-phosphate: step 3/5. Catalyzes the interconversion of 2-phosphoglycerate and 3-phosphoglycerate. This chain is 2,3-bisphosphoglycerate-dependent phosphoglycerate mutase, found in Rhizobium johnstonii (strain DSM 114642 / LMG 32736 / 3841) (Rhizobium leguminosarum bv. viciae).